The primary structure comprises 507 residues: Histidine--tRNA ligase (507 aa).

The protein belongs to the class-II aminoacyl-tRNA synthetase family. Homodimer.

The protein localises to the cytoplasm. The enzyme catalyses tRNA(His) + L-histidine + ATP = L-histidyl-tRNA(His) + AMP + diphosphate + H(+). In Rhizobium leguminosarum bv. trifolii (strain WSM2304), this protein is Histidine--tRNA ligase.